The sequence spans 872 residues: MKQEPTTYQPEEIEKKIYEICSHRGYFEINGNEKIQEKGKRFCLMMPPPNVTGILHIGHALTLSLQDILVRYKRMDGYKTLYQPGLDHAGIATQNVVEKQLLSQGVKKEDLGREKFIQKVWEWKEKSGGAILEQMKRLGVSTAFSRTRFTMDKGLQRAVKLAFLKWYEKGLIVQDNYMVNWCTKDGALSDIEVEYEERKGALYYIRYYLENQKDYLVVATTRPETLFGDSAIMVNPNDERYKHLVGQQVILPLINRTIPIIADAHVEMGFGTGCVKVTPGHDFNDYEVGKRHHLETIKIFDEKGILNAHCGEFENLERLEARDKVVAALKENALLEKIEEHVHQVGHCYRCHNVVEPYVSKQWFVKPEIAQSSIEKIQQGLARFYPSNWINNYNAWMRELRPWCISRQLFWGHQIPVFTCENNHQFVSLDTPLSCPTCKSEKLEQDKDVLDTWFSSGLWAFSTLGWGQEKSDLFNESDLKDFYPNTTLITGFDILFFWVARMLFCSESLLGELPFKDIYLHALVRDEKGEKMSKSKGNVIDPLEMIEKYGADSLRFTLANLCATGRDIKLSTTHLENNKNFANKLFNAASYLKLKQESFKDKERLNEYQTALGRYAKSRLNLVTKEVRNALDNYRFNDATTLLYRFLWGEFCDWFIEFSKVENEAIDELGSVLKEALKLLHPFMPFISESLYHKLSNTELENAHSIMVMPYPKEIAQDEKLEHEFEVIKDCIVSLRRLKIMLETPPIVLKEASVGLREKIENTERLQNYAQKLAKLEKVSVITYKPLKSVSDVGEFCQTYADLENLDLSPLIARLKKQLEKLEKEKLKLNLHNENFVKNAPKSVLEKARESLKTLLEKEGKIQQELDLLEQP.

A 'HIGH' region motif is present at residues Pro49–His59. Residues Lys531 to Ser535 carry the 'KMSKS' region motif. Lys534 lines the ATP pocket. The stretch at Pro810–Gln871 forms a coiled coil.

It belongs to the class-I aminoacyl-tRNA synthetase family. ValS type 1 subfamily. Monomer.

The protein resides in the cytoplasm. The enzyme catalyses tRNA(Val) + L-valine + ATP = L-valyl-tRNA(Val) + AMP + diphosphate. Catalyzes the attachment of valine to tRNA(Val). As ValRS can inadvertently accommodate and process structurally similar amino acids such as threonine, to avoid such errors, it has a 'posttransfer' editing activity that hydrolyzes mischarged Thr-tRNA(Val) in a tRNA-dependent manner. This Helicobacter pylori (strain J99 / ATCC 700824) (Campylobacter pylori J99) protein is Valine--tRNA ligase.